The following is a 442-amino-acid chain: DMATS-type prenyltransferase mfmD (442 aa).

The protein belongs to the tryptophan dimethylallyltransferase family.

The protein operates within secondary metabolite biosynthesis; terpenoid biosynthesis. In terms of biological role, prenyltransferase; part of the gene cluster that mediates the biosynthesis of the phthalide-terpenoid hybrid 11'-O-desmethylfendlerol. Within the pathway, mfmD is responsible for farnesylation of the cyclopolic acid intermediate via an O-prenylation reaction. The biosynthesis of 11'-O-desmethylfendlerol begins with the NR-PKS mfmB that forms 3,5-dimethylorsellinic acid (DMOA), which is then transformed into the phthalide 5,7-dihydroxy-4-(hydroxymethyl)-6-methylphthalide by the cytochrome P450 monooxygenase mfmA and the hydrolase mfmC. Subsequently, the methyltransferase mfmE catalyzes 7-O-methylation to yield 5-hydroxy-4-(hydroxymethyl)-7-methoxy-6-methylphthalide, which undergoes C-3 hydroxylation by the cytochrome P450 monooxygenase mfmF. The resultant cyclopolic acid (2,5-dihydroxy-4-(hydroxymethyl)-7-methoxy-6-methylphthalide) is then farnesylated by the DMATS-type prenyltransferase mfmD to afford 5-O-farnesylcyclopolic acid. Finally, the Pyr4-family terpene cyclase mfmH cyclizes the farnesyl moiety of 5-O-farnesylcyclopolic acid into a drimane-like structure, thus completing the biosynthesis of 11'-O-desmethylfendlerol. This Annulohypoxylon moriforme (Filamentous fungus) protein is DMATS-type prenyltransferase mfmD.